A 2611-amino-acid chain; its full sequence is Highly reducing polyketide synthase ATEG_07659 (2611 aa).

A Ketosynthase family 3 (KS3) domain is found at 10–409 (SEPIAIIGLS…GTNSHVIVEG (400 aa)). Active-site for beta-ketoacyl synthase activity residues include cysteine 157, histidine 292, and histidine 330. The malonyl-CoA:ACP transacylase (MAT) domain stretch occupies residues 537 to 844 (MVFTGQGAQW…VRFVEAFTDM (308 aa)). An N-terminal hotdog fold region spans residues 969-1109 (HDLLGVLVPG…GLITVQMAAD (141 aa)). In terms of domain architecture, PKS/mFAS DH spans 969–1292 (HDLLGVLVPG…CQSLGRSAPG (324 aa)). Residues 970–1289 (DLLGVLVPGT…GLVCQSLGRS (320 aa)) are dehydratase (DH) domain. The active-site Proton acceptor; for dehydratase activity is histidine 1001. A C-terminal hotdog fold region spans residues 1128–1292 (GYTRRIDPQD…CQSLGRSAPG (165 aa)). Aspartate 1199 (proton donor; for dehydratase activity) is an active-site residue. Positions 1469 to 1602 (FGQLKSLLAA…GATLLLMETT (134 aa)) are methyltransferase (CMet) domain. The interval 1898-2213 (GLLDTLAFGD…TGKHLGKLVL (316 aa)) is enoyl reductase (ER) domain. The tract at residues 2236-2416 (ASYLLVGGVG…AVSLDMGVIK (181 aa)) is ketoreductase (KR) domain. Low complexity predominate over residues 2499–2509 (SRAQAQQAGGD). The interval 2499–2520 (SRAQAQQAGGDSDSEPLSAKLR) is disordered. The Carrier domain occupies 2527–2604 (AAARCVGDAI…ALALDVVAKS (78 aa)). O-(pantetheine 4'-phosphoryl)serine is present on serine 2564.

Its pathway is secondary metabolite biosynthesis. Its function is as follows. Highly reducing polyketide synthase; part of the cluster B that mediates the biosynthesis of azasperpyranones, members of the azaphilone family that exhibit anti-cancer activities. Azasperpyranones are synthesized by 2 clusters, A and B. Cluster A is responsible for the production of the polyhydric phenol moiety while the azaphilonoid scaffold is produced by the cluster B. The non-reducing polyketide synthase ATEG_03629 produces 5-methyl orsellinic acid, which is then reduced to 5-methyl orsellinic aldehyde by the NRPS-like protein ATEG_03630. 5-methyl orsellinic aldehyde is then first hydroxylated by the FAD-dependent monooxygenase ATEG_03635 and subsequently hydroxylated by the cytochrome P450 monooxygenase ATEG_03631 to produce the unstable polyhydric phenol precursor of azasperpyranones. On the other hand, the polyketide synthase ATEG_07659 is responsible for producing the 3,5-dimethyloctadienone moiety from acetyl-CoA, three malonyl-CoA, and two S-adenosyl methionines (SAM). The 3,5-dimethyloctadienone moiety is then loaded onto the SAT domain of ATEG_07661 and extended with four malonyl-CoA and one SAM, which leads to the formation of 2,4-dihydroxy-6-(5,7-dimethyl-2-oxo-trans-3-trans-5-nonadienyl)-3-methylbenzaldehyde (compound 8) after reductive release and aldol condensation. The FAD-dependent monooxygenase ATEG_07662 is the next enzyme in the biosynthesis sequence and hydroxylates the side chain at the benzylic position of compound 8. In Aspergillus nidulans, afoF, the ortholog of the FAD-dependent oxygenase ATEG_07660, is the key enzyme for the biosynthesis of asperfuranone by catalyzing the hydroxylation at C-8 of to prevent the formation of a six-membered ring hemiacetal intermediate and thus facilitating the formation of a five-membered ring to produce asperfuranone. In Aspergillus terreus, ATEG_07660 is probably not functional, which leads to the formation of the six-membered ring hemiacetal intermediate presperpyranone instead of asperfuranone. Finally, ATEG_03636 is involved in the condensation of the polyhydric phenol moiety produced by cluster A and the perasperpyranone precursor produced by cluster B, to yield azasperpyranone A. Further modifications of azasperpyranone A result in the production of derivatives, including azasperpyranone B to F. The sequence is that of Highly reducing polyketide synthase ATEG_07659 from Aspergillus terreus (strain NIH 2624 / FGSC A1156).